Here is a 126-residue protein sequence, read N- to C-terminus: CLLILGLVLEQLQVEGKSCCRSTLGRNCYNLCRARGAQKLCAGVCRCKISSGLSCPKGFPKLALESNSDEPDTIEYCNLGCRSSVCDYMVNAAADDEEMKLYVENCADACVSFCNGDAGLPSLDAY.

Residues 1–16 (CLLILGLVLEQLQVEG) form the signal peptide. Disulfide bonds link Cys-19–Cys-55, Cys-20–Cys-47, Cys-28–Cys-45, and Cys-32–Cys-41. A propeptide spans 62-126 (LALESNSDEP…DAGLPSLDAY (65 aa)) (acidic domain).

It belongs to the plant thionin (TC 1.C.44) family. 4 C-C subfamily.

The protein localises to the secreted. In terms of biological role, thionins are small plant proteins which are toxic to animal cells. They seem to exert their toxic effect at the level of the cell membrane. Their precise function is not known. In Triticum aestivum (Wheat), this protein is Alpha-1-purothionin (THI1.1).